Consider the following 105-residue polypeptide: Cuticle protein AMP4 (105 aa).

A disordered region spans residues 1–21 (DRDAQTLTDERNDQGDGNFRY). The Chitin-binding type R&amp;R domain maps to 16-81 (DGNFRYEFET…PSSDLLPVGP (66 aa)).

As to expression, arthrodial membrane.

In Homarus americanus (American lobster), this protein is Cuticle protein AMP4.